A 419-amino-acid polypeptide reads, in one-letter code: Zinc finger protein Pegasus (419 aa).

Residue Lys-5 forms a Glycyl lysine isopeptide (Lys-Gly) (interchain with G-Cter in SUMO2) linkage. 3 consecutive C2H2-type zinc fingers follow at residues 82–104 (LKCR…IRIH), 110–132 (HRCH…MRSH), and 138–161 (YKCE…RRKH). Lys-185 participates in a covalent cross-link: Glycyl lysine isopeptide (Lys-Gly) (interchain with G-Cter in SUMO2). A compositionally biased stretch (polar residues) spans 223 to 236 (QTDSYESMAKTTPT). Disordered stretches follow at residues 223–245 (QTDS…DPQE) and 288–356 (MQQP…PTLP). Residues 289–311 (QQPSAQAVVSAVSASLPQSSSPA) show a composition bias toward low complexity. Positions 332–349 (SEPSAHTSTPSMGNSQPS) are enriched in polar residues. 2 C2H2-type zinc fingers span residues 364–386 (HHCQ…MGCH) and 392–416 (FQCN…RGQH).

The protein belongs to the Ikaros C2H2-type zinc-finger protein family. As to quaternary structure, self-associates. Interacts with other family members; IKZF1, IKZF2, IKZF3 and IKZF4.

Its subcellular location is the nucleus. Functionally, transcriptional repressor that binds the core 5'GNNTGTNG-3' DNA consensus sequence. Involved in megakaryocyte differentiation. The chain is Zinc finger protein Pegasus (IKZF5) from Bos taurus (Bovine).